Reading from the N-terminus, the 345-residue chain is S-adenosylmethionine:tRNA ribosyltransferase-isomerase (345 aa).

This sequence belongs to the QueA family. As to quaternary structure, monomer.

It is found in the cytoplasm. The enzyme catalyses 7-aminomethyl-7-carbaguanosine(34) in tRNA + S-adenosyl-L-methionine = epoxyqueuosine(34) in tRNA + adenine + L-methionine + 2 H(+). It participates in tRNA modification; tRNA-queuosine biosynthesis. In terms of biological role, transfers and isomerizes the ribose moiety from AdoMet to the 7-aminomethyl group of 7-deazaguanine (preQ1-tRNA) to give epoxyqueuosine (oQ-tRNA). In Acidithiobacillus ferrooxidans (strain ATCC 53993 / BNL-5-31) (Leptospirillum ferrooxidans (ATCC 53993)), this protein is S-adenosylmethionine:tRNA ribosyltransferase-isomerase.